A 126-amino-acid polypeptide reads, in one-letter code: Phosphoribosyl-AMP cyclohydrolase (126 aa).

Asp74 is a binding site for Mg(2+). Cys75 contributes to the Zn(2+) binding site. Mg(2+) contacts are provided by Asp76 and Asp78. Positions 92 and 99 each coordinate Zn(2+).

The protein belongs to the PRA-CH family. Homodimer. Requires Mg(2+) as cofactor. The cofactor is Zn(2+).

The protein localises to the cytoplasm. The enzyme catalyses 1-(5-phospho-beta-D-ribosyl)-5'-AMP + H2O = 1-(5-phospho-beta-D-ribosyl)-5-[(5-phospho-beta-D-ribosylamino)methylideneamino]imidazole-4-carboxamide. It functions in the pathway amino-acid biosynthesis; L-histidine biosynthesis; L-histidine from 5-phospho-alpha-D-ribose 1-diphosphate: step 3/9. Catalyzes the hydrolysis of the adenine ring of phosphoribosyl-AMP. This is Phosphoribosyl-AMP cyclohydrolase from Geotalea daltonii (strain DSM 22248 / JCM 15807 / FRC-32) (Geobacter daltonii).